Reading from the N-terminus, the 668-residue chain is Bifunctional polymyxin resistance protein ArnA (668 aa).

The tract at residues 1–307 (MSAKTVVFAY…ELGLVDGSLL (307 aa)) is formyltransferase ArnAFT. Residue H106 is the Proton donor; for formyltransferase activity of the active site. (6R)-10-formyltetrahydrofolate-binding positions include R116 and 138-142 (VKRAD). The dehydrogenase ArnADH stretch occupies residues 317–668 (RRTRVLILGV…IERPSNKEAC (352 aa)). NAD(+) is bound by residues D350 and 371-372 (DI). Residues A396, Y401, and 435–436 (TS) each bind UDP-alpha-D-glucuronate. Catalysis depends on E437, which acts as the Proton acceptor; for decarboxylase activity. UDP-alpha-D-glucuronate contacts are provided by residues R463, N494, 528–537 (RLFDGGEQKR), and Y615. Catalysis depends on R621, which acts as the Proton donor; for decarboxylase activity.

In the N-terminal section; belongs to the Fmt family. UDP-L-Ara4N formyltransferase subfamily. The protein in the C-terminal section; belongs to the NAD(P)-dependent epimerase/dehydratase family. UDP-glucuronic acid decarboxylase subfamily. In terms of assembly, homohexamer, formed by a dimer of trimers.

It catalyses the reaction UDP-alpha-D-glucuronate + NAD(+) = UDP-beta-L-threo-pentopyranos-4-ulose + CO2 + NADH. It carries out the reaction UDP-4-amino-4-deoxy-beta-L-arabinose + (6R)-10-formyltetrahydrofolate = UDP-4-deoxy-4-formamido-beta-L-arabinose + (6S)-5,6,7,8-tetrahydrofolate + H(+). It participates in nucleotide-sugar biosynthesis; UDP-4-deoxy-4-formamido-beta-L-arabinose biosynthesis; UDP-4-deoxy-4-formamido-beta-L-arabinose from UDP-alpha-D-glucuronate: step 1/3. It functions in the pathway nucleotide-sugar biosynthesis; UDP-4-deoxy-4-formamido-beta-L-arabinose biosynthesis; UDP-4-deoxy-4-formamido-beta-L-arabinose from UDP-alpha-D-glucuronate: step 3/3. The protein operates within bacterial outer membrane biogenesis; lipopolysaccharide biosynthesis. In terms of biological role, bifunctional enzyme that catalyzes the oxidative decarboxylation of UDP-glucuronic acid (UDP-GlcUA) to UDP-4-keto-arabinose (UDP-Ara4O) and the addition of a formyl group to UDP-4-amino-4-deoxy-L-arabinose (UDP-L-Ara4N) to form UDP-L-4-formamido-arabinose (UDP-L-Ara4FN). The modified arabinose is attached to lipid A and is required for resistance to polymyxin and cationic antimicrobial peptides. This chain is Bifunctional polymyxin resistance protein ArnA, found in Pseudomonas fluorescens (strain Pf0-1).